Consider the following 274-residue polypeptide: Penicillin-insensitive murein endopeptidase (274 aa).

The signal sequence occupies residues 1–19; sequence MKKTALALLALLVSSASLA. 3 disulfides stabilise this stretch: Cys-44–Cys-265, Cys-187–Cys-235, and Cys-216–Cys-223. Zn(2+) contacts are provided by His-110, His-113, Asp-120, Asp-147, His-150, and His-211. Residues 225–274 form a disordered region; sequence DQPLPPPGDGCGAELQSWFEPPEPGTTKPEKKTPPPLPPSCQALLDEHVL.

This sequence belongs to the peptidase M74 family. As to quaternary structure, dimer. Requires Zn(2+) as cofactor.

It localises to the periplasm. In terms of biological role, murein endopeptidase that cleaves the D-alanyl-meso-2,6-diamino-pimelyl amide bond that connects peptidoglycan strands. Likely plays a role in the removal of murein from the sacculus. The protein is Penicillin-insensitive murein endopeptidase of Citrobacter koseri (strain ATCC BAA-895 / CDC 4225-83 / SGSC4696).